Consider the following 232-residue polypeptide: 2,3,4,5-tetrahydropyridine-2,6-dicarboxylate N-acetyltransferase (232 aa).

It belongs to the transferase hexapeptide repeat family. DapH subfamily.

It carries out the reaction (S)-2,3,4,5-tetrahydrodipicolinate + acetyl-CoA + H2O = L-2-acetamido-6-oxoheptanedioate + CoA. The protein operates within amino-acid biosynthesis; L-lysine biosynthesis via DAP pathway; LL-2,6-diaminopimelate from (S)-tetrahydrodipicolinate (acetylase route): step 1/3. Its function is as follows. Catalyzes the transfer of an acetyl group from acetyl-CoA to tetrahydrodipicolinate. The chain is 2,3,4,5-tetrahydropyridine-2,6-dicarboxylate N-acetyltransferase from Streptococcus uberis (strain ATCC BAA-854 / 0140J).